We begin with the raw amino-acid sequence, 230 residues long: Sugar fermentation stimulation protein homolog (230 aa).

It belongs to the SfsA family.

The chain is Sugar fermentation stimulation protein homolog from Clostridium perfringens (strain SM101 / Type A).